We begin with the raw amino-acid sequence, 398 residues long: Set1 complex component swd1 (398 aa).

5 WD repeats span residues 22–61 (LKHG…VSRV), 64–103 (GHTR…IVYQ), 162–202 (NRSK…IRSS), 247–295 (KFQD…KILE), and 296–336 (GPKE…SWSA).

In terms of assembly, component of the Set1 complex composed of ash2, sdc1, set1, shg1, spp1, swd1, swd2 and swd3.

The protein resides in the nucleus. The Set1 complex specifically methylates 'Lys-4' of histone H3. This chain is Set1 complex component swd1 (swd1), found in Schizosaccharomyces pombe (strain 972 / ATCC 24843) (Fission yeast).